Consider the following 526-residue polypeptide: Bifunctional purine biosynthesis protein PurH (526 aa).

Residues 1 to 145 enclose the MGS-like domain; that stretch reads MSKAPLALLS…KNHAHVGIVT (145 aa).

The protein belongs to the PurH family.

The catalysed reaction is (6R)-10-formyltetrahydrofolate + 5-amino-1-(5-phospho-beta-D-ribosyl)imidazole-4-carboxamide = 5-formamido-1-(5-phospho-D-ribosyl)imidazole-4-carboxamide + (6S)-5,6,7,8-tetrahydrofolate. The enzyme catalyses IMP + H2O = 5-formamido-1-(5-phospho-D-ribosyl)imidazole-4-carboxamide. The protein operates within purine metabolism; IMP biosynthesis via de novo pathway; 5-formamido-1-(5-phospho-D-ribosyl)imidazole-4-carboxamide from 5-amino-1-(5-phospho-D-ribosyl)imidazole-4-carboxamide (10-formyl THF route): step 1/1. It participates in purine metabolism; IMP biosynthesis via de novo pathway; IMP from 5-formamido-1-(5-phospho-D-ribosyl)imidazole-4-carboxamide: step 1/1. This is Bifunctional purine biosynthesis protein PurH from Psychrobacter arcticus (strain DSM 17307 / VKM B-2377 / 273-4).